Here is an 821-residue protein sequence, read N- to C-terminus: DNA replication licensing factor MCM6 (821 aa).

Methionine 1 is modified (N-acetylmethionine). Phosphoserine occurs at positions 13, 219, and 271. Phosphothreonine is present on threonine 278. The 208-residue stretch at 346-553 (LYHNLCTSLF…TDYAIARRIV (208 aa)) folds into the MCM domain. ATP contacts are provided by histidine 359, serine 399, threonine 400, alanine 401, lysine 402, serine 403, and asparagine 504. Positions 528-531 (SRFD) match the Arginine finger motif. The ADP site is built by arginine 619 and glutamate 622. Lysine 643 is subject to N6-acetyllysine. Positions 676–708 (TDEGQGGVNGHADSPAPVNRFNGSSEDASQETV) are disordered. 3 positions are modified to phosphoserine: serine 689, serine 704, and serine 762. The segment covering 696-708 (FNGSSEDASQETV) has biased composition (polar residues). The residue at position 791 (threonine 791) is a Phosphothreonine.

Belongs to the MCM family. As to quaternary structure, component of the MCM2-7 complex. The complex forms a toroidal hexameric ring with the proposed subunit order MCM2-MCM6-MCM4-MCM7-MCM3-MCM5. Component of the CMG helicase complex, a hexameric ring of related MCM2-7 subunits stabilized by CDC45 and the tetrameric GINS complex. May interact with MCM10. Interacts with TIPIN. Interacts with CDT1. Interacts with MCMBP. Interacts with DDI2. In terms of processing, O-glycosylated (O-GlcNAcylated), in a cell cycle-dependent manner.

It localises to the nucleus. Its subcellular location is the chromosome. It carries out the reaction ATP + H2O = ADP + phosphate + H(+). Its function is as follows. Acts as a component of the MCM2-7 complex (MCM complex) which is the replicative helicase essential for 'once per cell cycle' DNA replication initiation and elongation in eukaryotic cells. Core component of CDC45-MCM-GINS (CMG) helicase, the molecular machine that unwinds template DNA during replication, and around which the replisome is built. The active ATPase sites in the MCM2-7 ring are formed through the interaction surfaces of two neighboring subunits such that a critical structure of a conserved arginine finger motif is provided in trans relative to the ATP-binding site of the Walker A box of the adjacent subunit. The six ATPase active sites, however, are likely to contribute differentially to the complex helicase activity. This is DNA replication licensing factor MCM6 (Mcm6) from Mus musculus (Mouse).